The following is a 532-amino-acid chain: ATP synthase subunit alpha (532 aa).

Residue glycine 171 to threonine 178 coordinates ATP.

The protein belongs to the ATPase alpha/beta chains family. F-type ATPases have 2 components, CF(1) - the catalytic core - and CF(0) - the membrane proton channel. CF(1) has five subunits: alpha(3), beta(3), gamma(1), delta(1), epsilon(1). CF(0) has three main subunits: a(1), b(2) and c(9-12). The alpha and beta chains form an alternating ring which encloses part of the gamma chain. CF(1) is attached to CF(0) by a central stalk formed by the gamma and epsilon chains, while a peripheral stalk is formed by the delta and b chains.

The protein localises to the cell membrane. The enzyme catalyses ATP + H2O + 4 H(+)(in) = ADP + phosphate + 5 H(+)(out). Functionally, produces ATP from ADP in the presence of a proton gradient across the membrane. The alpha chain is a regulatory subunit. This Amoebophilus asiaticus (strain 5a2) protein is ATP synthase subunit alpha.